Consider the following 240-residue polypeptide: Large ribosomal subunit protein bL25 (240 aa).

Disordered regions lie at residues M1–R20 and G204–K240. Residues G204–G229 are compositionally biased toward low complexity. The segment covering G230–K240 has biased composition (basic and acidic residues).

Belongs to the bacterial ribosomal protein bL25 family. CTC subfamily. In terms of assembly, part of the 50S ribosomal subunit; part of the 5S rRNA/L5/L18/L25 subcomplex. Contacts the 5S rRNA. Binds to the 5S rRNA independently of L5 and L18.

In terms of biological role, this is one of the proteins that binds to the 5S RNA in the ribosome where it forms part of the central protuberance. In Anaeromyxobacter sp. (strain K), this protein is Large ribosomal subunit protein bL25.